Here is a 363-residue protein sequence, read N- to C-terminus: Carbamoyl phosphate synthase small chain (363 aa).

2 CPSase regions span residues 1-168 (MTKR…ASPG) and 1-172 (MTKR…DGKR). L-glutamine is bound by residues serine 46, glycine 220, and glycine 222. The 188-residue stretch at 172–359 (RVVLVDYGVK…MEMMNVKEEG (188 aa)) folds into the Glutamine amidotransferase type-1 domain. Residue cysteine 247 is the Nucleophile of the active site. L-glutamine contacts are provided by leucine 248, glutamine 251, asparagine 289, glycine 291, and tyrosine 292. Residues histidine 332 and glutamate 334 contribute to the active site.

Belongs to the CarA family. Composed of two chains; the small (or glutamine) chain promotes the hydrolysis of glutamine to ammonia, which is used by the large (or ammonia) chain to synthesize carbamoyl phosphate. Tetramer of heterodimers (alpha,beta)4.

It catalyses the reaction hydrogencarbonate + L-glutamine + 2 ATP + H2O = carbamoyl phosphate + L-glutamate + 2 ADP + phosphate + 2 H(+). It carries out the reaction L-glutamine + H2O = L-glutamate + NH4(+). It functions in the pathway amino-acid biosynthesis; L-arginine biosynthesis; carbamoyl phosphate from bicarbonate: step 1/1. Its pathway is pyrimidine metabolism; UMP biosynthesis via de novo pathway; (S)-dihydroorotate from bicarbonate: step 1/3. In terms of biological role, small subunit of the glutamine-dependent carbamoyl phosphate synthetase (CPSase). CPSase catalyzes the formation of carbamoyl phosphate from the ammonia moiety of glutamine, carbonate, and phosphate donated by ATP, constituting the first step of 2 biosynthetic pathways, one leading to arginine and/or urea and the other to pyrimidine nucleotides. The small subunit (glutamine amidotransferase) binds and cleaves glutamine to supply the large subunit with the substrate ammonia. The chain is Carbamoyl phosphate synthase small chain from Listeria innocua serovar 6a (strain ATCC BAA-680 / CLIP 11262).